Reading from the N-terminus, the 384-residue chain is Opsin-3 (384 aa).

Topologically, residues 1 to 62 are extracellular; that stretch reads MATNFTQELY…VSKYWHYVLA (62 aa). N4 is a glycosylation site (N-linked (GlcNAc...) asparagine). A helical transmembrane segment spans residues 63-83; the sequence is LIYTMLMVTSLTGNGIVIWIF. Residues 84–94 are Cytoplasmic-facing; sequence STSKSLRSASN. Residues 95-115 traverse the membrane as a helical segment; that stretch reads MFVINLAVFDLMMMLEMPLLI. Residues 116–132 are Extracellular-facing; that stretch reads MNSFYQRLVGYQLGCDV. A disulfide bond links C130 and C207. A helical transmembrane segment spans residues 133 to 153; sequence YAVLGSLSGIGGAITNAVIAF. Residues 154–171 lie on the Cytoplasmic side of the membrane; sequence DRYKTISSPLDGRINTVQ. A helical membrane pass occupies residues 172–192; that stretch reads AGLLIAFTWFWALPFTILPAF. Residues 193–219 lie on the Extracellular side of the membrane; the sequence is RIWGRFVPEGFLTTCSFDYFTEDQDTE. A helical membrane pass occupies residues 220–240; sequence VFVACIFVWSYCIPMALICYF. Residues 241–284 lie on the Cytoplasmic side of the membrane; it reads YSQLFGAVRLHERMLQEQAKKMNVKSLASNKEDNSRSVEIRIAK. A helical membrane pass occupies residues 285-305; it reads VAFTIFFLFICAWTPYAFVTM. At 306-312 the chain is on the extracellular side; sequence TGAFGDR. A helical transmembrane segment spans residues 313 to 333; sequence TLLTPIATMIPAVCCKVVSCI. Residues 334–384 lie on the Cytoplasmic side of the membrane; it reads DPWVYAINHPRYRAELQKRLPWMGVREQDPDAVSTTTSVATAGFQPPAAEA.

This sequence belongs to the G-protein coupled receptor 1 family. Opsin subfamily. As to expression, in the retina, expression is essentially uniformly distributed but a higher level is seen in the ventral region where the B-cells are localized.

It is found in the membrane. Functionally, visual pigments are the light-absorbing molecules that mediate vision. They consist of an apoprotein, opsin, covalently linked to cis-retinal. May play a role in photoperiodic photoreception. The polypeptide is Opsin-3 (OP3) (Manduca sexta (Tobacco hawkmoth)).